We begin with the raw amino-acid sequence, 364 residues long: Isopentenyl-diphosphate delta-isomerase (364 aa).

Residues 1-13 show a composition bias toward basic and acidic residues; sequence MSSAQRKDDHVRL. The segment at 1 to 24 is disordered; sequence MSSAQRKDDHVRLATEQQRAHSGR. 6–7 lines the substrate pocket; it reads RK. FMN-binding positions include 64–66, S94, and N123; that span reads AMT. 94-96 is a binding site for substrate; that stretch reads SMH. Q153 contributes to the substrate binding site. Residue E154 coordinates Mg(2+). FMN-binding positions include K185, S210, T215, 259-261, and 280-281; these read GIR and SG.

This sequence belongs to the IPP isomerase type 2 family. In terms of assembly, homooctamer. Dimer of tetramers. It depends on FMN as a cofactor. NADPH is required as a cofactor. Mg(2+) serves as cofactor.

The protein localises to the cytoplasm. The catalysed reaction is isopentenyl diphosphate = dimethylallyl diphosphate. Its function is as follows. Involved in the biosynthesis of isoprenoids. Catalyzes the 1,3-allylic rearrangement of the homoallylic substrate isopentenyl (IPP) to its allylic isomer, dimethylallyl diphosphate (DMAPP). The chain is Isopentenyl-diphosphate delta-isomerase from Kitasatospora griseola (Streptomyces griseolosporeus).